Consider the following 303-residue polypeptide: GGSCGQCRVEVHSGGGDILPTEEGHINKREAKSGCRLACQVAVKQDMEIEVEDEIFGVQQWECEVISNDNKATFIKELKLQIPNGESVPFKAGGYIQIEAPAHHVKYSDFEIDEQYRGDWKHFGFFDVESKVDTDTLRAYSMANYPEEEGIIMLNVRIATPPPGRLHLPAGKMSSYIFSLKAGDKVTISGPFGEFFAKETDNEMVFIGGGAGMAPMRSHIFDQLKRLHSKRKMSFWYGARSKREMFYEDDYNGLAADNDNFQWHVALSDPQPEDNWDGLTGFIHNVLFEEYLKDHEAPEDCEY.

The region spanning 1-45 (GGSCGQCRVEVHSGGGDILPTEEGHINKREAKSGCRLACQVAVKQ) is the 2Fe-2S ferredoxin-type domain. Positions 4, 7, and 39 each coordinate [2Fe-2S] cluster. The FAD-binding FR-type domain maps to 58-198 (VQQWECEVIS…SGPFGEFFAK (141 aa)). Residues 201-303 (DNEMVFIGGG…DHEAPEDCEY (103 aa)) are catalytic.

Belongs to the NqrF family. As to quaternary structure, composed of six subunits; NqrA, NqrB, NqrC, NqrD, NqrE and NqrF. [2Fe-2S] cluster is required as a cofactor. It depends on FAD as a cofactor.

The protein localises to the cell inner membrane. It carries out the reaction a ubiquinone + n Na(+)(in) + NADH + H(+) = a ubiquinol + n Na(+)(out) + NAD(+). Functionally, NQR complex catalyzes the reduction of ubiquinone-1 to ubiquinol by two successive reactions, coupled with the transport of Na(+) ions from the cytoplasm to the periplasm. The first step is catalyzed by NqrF, which accepts electrons from NADH and reduces ubiquinone-1 to ubisemiquinone by a one-electron transfer pathway. In Colwellia maris, this protein is Na(+)-translocating NADH-quinone reductase subunit F (nqrF).